The primary structure comprises 496 residues: Glutamyl-tRNA(Gln) amidotransferase subunit A (496 aa).

Catalysis depends on charge relay system residues Lys-75 and Ser-150. Ser-174 acts as the Acyl-ester intermediate in catalysis.

This sequence belongs to the amidase family. GatA subfamily. In terms of assembly, heterotrimer of A, B and C subunits.

The enzyme catalyses L-glutamyl-tRNA(Gln) + L-glutamine + ATP + H2O = L-glutaminyl-tRNA(Gln) + L-glutamate + ADP + phosphate + H(+). In terms of biological role, allows the formation of correctly charged Gln-tRNA(Gln) through the transamidation of misacylated Glu-tRNA(Gln) in organisms which lack glutaminyl-tRNA synthetase. The reaction takes place in the presence of glutamine and ATP through an activated gamma-phospho-Glu-tRNA(Gln). This chain is Glutamyl-tRNA(Gln) amidotransferase subunit A, found in Burkholderia lata (strain ATCC 17760 / DSM 23089 / LMG 22485 / NCIMB 9086 / R18194 / 383).